We begin with the raw amino-acid sequence, 371 residues long: MYSETPIKRRPSSRIYVGKVPIGDGAPIAVQSMTNTKTTDVEATIAQIRALEKVGADIVRVSVPTMDAAEAFKIIKQSVNVPLVADIHFDYRIALKVAEYGVDCLRINPGNIGNEQRIRSVVECARDNNIPIRIGVNGGSLEKDLMDKYREPTPQALLESAMRHVDILDRLNFDQFKVSVKASDVFLAVESYRLLAKQIRQPLHLGITEAGGLRAGSVKSAVGLGMLLAEGIGDTIRISLAADPIEEIKVGFDILKSLRIRSRGINFIACPSCSRQEFDVINTVNELERRLEDLVTPMDVSIIGCVVNGPGEALVSHIGLTGGANKSGYYDDGVRQKERFDNLNLVDSLEAKIRAKASLMANRIAISDKTD.

Positions 270, 273, 305, and 312 each coordinate [4Fe-4S] cluster.

The protein belongs to the IspG family. It depends on [4Fe-4S] cluster as a cofactor.

It catalyses the reaction (2E)-4-hydroxy-3-methylbut-2-enyl diphosphate + oxidized [flavodoxin] + H2O + 2 H(+) = 2-C-methyl-D-erythritol 2,4-cyclic diphosphate + reduced [flavodoxin]. It participates in isoprenoid biosynthesis; isopentenyl diphosphate biosynthesis via DXP pathway; isopentenyl diphosphate from 1-deoxy-D-xylulose 5-phosphate: step 5/6. Its function is as follows. Converts 2C-methyl-D-erythritol 2,4-cyclodiphosphate (ME-2,4cPP) into 1-hydroxy-2-methyl-2-(E)-butenyl 4-diphosphate. The protein is 4-hydroxy-3-methylbut-2-en-1-yl diphosphate synthase (flavodoxin) of Shewanella denitrificans (strain OS217 / ATCC BAA-1090 / DSM 15013).